Reading from the N-terminus, the 229-residue chain is Urease accessory protein UreF (229 aa).

The protein belongs to the UreF family. UreD, UreF and UreG form a complex that acts as a GTP-hydrolysis-dependent molecular chaperone, activating the urease apoprotein by helping to assemble the nickel containing metallocenter of UreC. The UreE protein probably delivers the nickel.

It localises to the cytoplasm. Its function is as follows. Required for maturation of urease via the functional incorporation of the urease nickel metallocenter. The sequence is that of Urease accessory protein UreF from Staphylococcus saprophyticus subsp. saprophyticus (strain ATCC 15305 / DSM 20229 / NCIMB 8711 / NCTC 7292 / S-41).